The chain runs to 98 residues: Protein FAM24A (98 aa).

An N-terminal signal peptide occupies residues 1-29; that stretch reads MFDLRTKVMIGIASTLLIAAIVLITVVFC.

The protein belongs to the FAM24 family.

It is found in the secreted. The chain is Protein FAM24A (Fam24a) from Rattus norvegicus (Rat).